The sequence spans 581 residues: ATP-dependent lipid A-core flippase (581 aa).

5 consecutive transmembrane segments (helical) span residues Leu-15 to Leu-35, Leu-68 to Ile-88, Ile-152 to Val-172, Pro-252 to Pro-272, and Ile-274 to Met-294. The ABC transmembrane type-1 domain occupies Ile-27–Arg-309. In terms of domain architecture, ABC transporter spans Ile-341–Met-577. Gly-375–Ser-382 contacts ATP.

Belongs to the ABC transporter superfamily. Lipid exporter (TC 3.A.1.106) family. Homodimer.

The protein localises to the cell inner membrane. The enzyme catalyses ATP + H2O + lipid A-core oligosaccharideSide 1 = ADP + phosphate + lipid A-core oligosaccharideSide 2.. In terms of biological role, involved in lipopolysaccharide (LPS) biosynthesis. Translocates lipid A-core from the inner to the outer leaflet of the inner membrane. Transmembrane domains (TMD) form a pore in the inner membrane and the ATP-binding domain (NBD) is responsible for energy generation. The polypeptide is ATP-dependent lipid A-core flippase (Photorhabdus laumondii subsp. laumondii (strain DSM 15139 / CIP 105565 / TT01) (Photorhabdus luminescens subsp. laumondii)).